We begin with the raw amino-acid sequence, 430 residues long: Adenylosuccinate synthetase (430 aa).

Residues 13–19 and 41–43 each bind GTP; these read GDEGKGK and GHT. The active-site Proton acceptor is D14. The Mg(2+) site is built by D14 and G41. IMP contacts are provided by residues 14–17, 39–42, T130, R144, Q225, T240, and R304; these read DEGK and NAGH. The active-site Proton donor is H42. A substrate-binding site is contributed by 300 to 306; sequence STTGRAR. Residues R306, 332-334, and 414-416 each bind GTP; these read KLD and STG.

It belongs to the adenylosuccinate synthetase family. As to quaternary structure, homodimer. It depends on Mg(2+) as a cofactor.

Its subcellular location is the cytoplasm. The catalysed reaction is IMP + L-aspartate + GTP = N(6)-(1,2-dicarboxyethyl)-AMP + GDP + phosphate + 2 H(+). The protein operates within purine metabolism; AMP biosynthesis via de novo pathway; AMP from IMP: step 1/2. Functionally, plays an important role in the de novo pathway of purine nucleotide biosynthesis. Catalyzes the first committed step in the biosynthesis of AMP from IMP. This is Adenylosuccinate synthetase from Pseudomonas putida (strain W619).